Consider the following 74-residue polypeptide: ATP synthase subunit c (74 aa).

2 helical membrane passes run 8-28 and 52-72; these read FIGV…VSNI and IGAG…MLLI.

This sequence belongs to the ATPase C chain family. In terms of assembly, F-type ATPases have 2 components, F(1) - the catalytic core - and F(0) - the membrane proton channel. F(1) has five subunits: alpha(3), beta(3), gamma(1), delta(1), epsilon(1). F(0) has three main subunits: a(1), b(2) and c(10-14). The alpha and beta chains form an alternating ring which encloses part of the gamma chain. F(1) is attached to F(0) by a central stalk formed by the gamma and epsilon chains, while a peripheral stalk is formed by the delta and b chains.

Its subcellular location is the cell inner membrane. Functionally, f(1)F(0) ATP synthase produces ATP from ADP in the presence of a proton or sodium gradient. F-type ATPases consist of two structural domains, F(1) containing the extramembraneous catalytic core and F(0) containing the membrane proton channel, linked together by a central stalk and a peripheral stalk. During catalysis, ATP synthesis in the catalytic domain of F(1) is coupled via a rotary mechanism of the central stalk subunits to proton translocation. Key component of the F(0) channel; it plays a direct role in translocation across the membrane. A homomeric c-ring of between 10-14 subunits forms the central stalk rotor element with the F(1) delta and epsilon subunits. This chain is ATP synthase subunit c, found in Rickettsia canadensis (strain McKiel).